Consider the following 123-residue polypeptide: Sterol carrier protein 2 (123 aa).

The 98-residue stretch at 16–113 folds into the SCP2 domain; the sequence is KEHLSTDAGK…GSLSAAQKFT (98 aa). Residues 121 to 123 carry the Microbody targeting signal motif; it reads SKL.

In terms of tissue distribution, expressed in most tissues including seedlings, cotyledons, inflorescence, leaves, stems, roots, siliques and flower buds, with the highest levels in floral tissues and in maturing seeds.

It is found in the peroxisome. Enhances the transfer of lipids between membranes in vitro. Active on phosphatidylcholine (PC), 1-palmitoyl 2-oleoyl phosphatidylcholine (POPC) and ergosterol, and, to a lower extent, dimyristoyl phosphatidic acid, stigmasterol, desmosterol, beta-sitosterol and steryl glucoside. Inactive or poorly active on palmitic acid, stearoyl-coenzyme A, cholesterol, glucosylceramide and ceramide. Required during seeds and seedlings development. The polypeptide is Sterol carrier protein 2 (Arabidopsis thaliana (Mouse-ear cress)).